Here is a 366-residue protein sequence, read N- to C-terminus: Methyltransferase calH (366 aa).

S-adenosyl-L-methionine is bound by residues threonine 189, aspartate 216, and 245–246; that span reads NA.

It belongs to the class I-like SAM-binding methyltransferase superfamily.

The protein operates within secondary metabolite biosynthesis. In terms of biological role, methyltransferase; part of the gene cluster that mediates the biosynthesis of calbistrin A and related compounds. Calbistrin A is a secondary metabolite with an interesting structure that was recently found to have bioactivity against leukemia cells. It consists of two polyketides linked by an ester bond: a bicyclic decalin containing polyketide and a linear 12 carbon dioic acid structure. The polyketide synthase calA is probably responsible for forming the decalin moiety. Because calA lacks a designated enoylreductase (ER) domain, the required activity is provided by the trans-enoyl reductase calK. Following release from the PKS, calF then probably catalyzes the oxidation and the subsequent Diels Alder cycloisomerization that lead to the formation of the decalin moiety. The decalin polyketide backbone includes two C-methyl groups, at C7 and C11 in backbone, of which the C7 position is probably methylated by the methyltransferase domain of calA. A candidate for adding the methyl group at C11, if not done by CalA, is the cluster methyltransferase calH. Several additional tailoring enzymes within the cluster could be involved in the modification of the decalin polyketide product. Those include the 3 cytochrome P450 monooxygenases CalE, CalG and CalL, of which one might be responsible for the introduction of the extra hydroxyl group attached to the backbone of the decalin moiety, at position C9 in the backbone, that allows for attachment of the linear moiety. One tailoring enzyme activity that is expected to be involved in biosynthesis of calbistrin is an acyltransferase for connecting the two polyketide synthase products, and which could be performed by the cluster acyltransferase calJ. The enzyme responsible for the biosynthesis of the linear moiety, probably a second PKS, has not been identified yet. The sequence is that of Methyltransferase calH from Penicillium decumbens.